Reading from the N-terminus, the 247-residue chain is Mannose-specific lectin CML-2 (247 aa).

Residues aspartate 87 and glycine 107 each coordinate a carbohydrate. Asparagine 119 is a glycosylation site (N-linked (GlcNAc...) asparagine). Residues glutamate 129 and aspartate 131 each contribute to the Mn(2+) site. Ca(2+) is bound by residues aspartate 131 and phenylalanine 133. 2 residues coordinate a carbohydrate: serine 138 and asparagine 139. Ca(2+)-binding residues include asparagine 139 and aspartate 142. The Mn(2+) site is built by aspartate 142 and histidine 147. A carbohydrate is bound by residues glycine 221, glutamate 222, and glutamine 223.

This sequence belongs to the leguminous lectin family. Homodimer; non-covalently linked. Post-translationally, glycosylated.

Mannose-specific lectin. Also binds alpha-methyl-D-mannoside, D-glucose, N-acetyl-D-glucosamine and sucrose but not D-galactose, D-arabinose, D-fructose, D-xylose, lactose or glycoproteins fetiun, PSM and ovalbumin. Shows agglutinating activity towards rabbit erythrocytes. The protein is Mannose-specific lectin CML-2 of Centrolobium microchaete (Canarywood tree).